Here is a 318-residue protein sequence, read N- to C-terminus: Triplex capsid protein 2 (318 aa).

The protein belongs to the herpesviridae TRX2 protein family. As to quaternary structure, interacts with TRX1 and major capisd protein/MCP.

Its subcellular location is the virion. It is found in the host nucleus. Its function is as follows. Structural component of the T=16 icosahedral capsid. The capsid is composed of pentamers and hexamers of major capsid protein/MCP, which are linked together by heterotrimers called triplexes. These triplexes are formed by a single molecule of triplex protein 1/TRX1 and two copies of triplex protein 2/TRX2. Additionally, TRX1 is required for efficient transport of TRX2 to the nucleus, which is the site of capsid assembly. This Human herpesvirus 2 (strain HG52) (HHV-2) protein is Triplex capsid protein 2.